A 769-amino-acid chain; its full sequence is Probable beta-glucosidase M (769 aa).

Positions 1-22 (MHSNVGLAGLAGLLATASVCLS) are cleaved as a signal peptide. 3 N-linked (GlcNAc...) asparagine glycosylation sites follow: Asn28, Asn75, and Asn262. Residue Asp290 is part of the active site. Residues Asn318, Asn325, Asn396, Asn437, Asn510, Asn546, and Asn625 are each glycosylated (N-linked (GlcNAc...) asparagine).

Belongs to the glycosyl hydrolase 3 family.

The protein localises to the secreted. It catalyses the reaction Hydrolysis of terminal, non-reducing beta-D-glucosyl residues with release of beta-D-glucose.. The protein operates within glycan metabolism; cellulose degradation. Beta-glucosidases are one of a number of cellulolytic enzymes involved in the degradation of cellulosic biomass. Catalyzes the last step releasing glucose from the inhibitory cellobiose. This chain is Probable beta-glucosidase M (bglM), found in Aspergillus fumigatus (strain CBS 144.89 / FGSC A1163 / CEA10) (Neosartorya fumigata).